Reading from the N-terminus, the 392-residue chain is Putative glutamate--cysteine ligase 2 (392 aa).

The interval 347–367 (AARKHGAAPEPGTRTRGDDGV) is disordered.

The protein belongs to the glutamate--cysteine ligase type 2 family. YbdK subfamily.

It carries out the reaction L-cysteine + L-glutamate + ATP = gamma-L-glutamyl-L-cysteine + ADP + phosphate + H(+). Functionally, ATP-dependent carboxylate-amine ligase which exhibits weak glutamate--cysteine ligase activity. In Corynebacterium jeikeium (strain K411), this protein is Putative glutamate--cysteine ligase 2.